The primary structure comprises 35 residues: Photosystem II reaction center protein M (35 aa).

The chain crosses the membrane as a helical span at residues 7-27; it reads GFIATILFVLVPTVFLLILYI.

Belongs to the PsbM family. In terms of assembly, PSII is composed of 1 copy each of membrane proteins PsbA, PsbB, PsbC, PsbD, PsbE, PsbF, PsbH, PsbI, PsbJ, PsbK, PsbL, PsbM, PsbT, PsbX, PsbY, PsbZ, Psb30/Ycf12, peripheral proteins PsbO, CyanoQ (PsbQ), PsbU, PsbV and a large number of cofactors. It forms dimeric complexes.

It is found in the cellular thylakoid membrane. Its function is as follows. One of the components of the core complex of photosystem II (PSII). PSII is a light-driven water:plastoquinone oxidoreductase that uses light energy to abstract electrons from H(2)O, generating O(2) and a proton gradient subsequently used for ATP formation. It consists of a core antenna complex that captures photons, and an electron transfer chain that converts photonic excitation into a charge separation. This subunit is found at the monomer-monomer interface. This Gloeothece citriformis (strain PCC 7424) (Cyanothece sp. (strain PCC 7424)) protein is Photosystem II reaction center protein M.